Consider the following 507-residue polypeptide: Beta-glucosidase 13 (507 aa).

Positions 1–22 are cleaved as a signal peptide; it reads MRTKYFSLLVFIIVLASNEVIA. Q50 is a binding site for a beta-D-glucoside. N81 is a glycosylation site (N-linked (GlcNAc...) asparagine). A beta-D-glucoside-binding positions include H154 and 199 to 200; that span reads NE. E200 acts as the Proton donor in catalysis. C219 and C227 are oxidised to a cystine. A glycan (N-linked (GlcNAc...) asparagine) is linked at N226. Residue Y344 participates in a beta-D-glucoside binding. N-linked (GlcNAc...) asparagine glycosylation occurs at N358. A beta-D-glucoside is bound by residues E414, W459, 466-467, and F475; that span reads EW. The Nucleophile role is filled by E414.

It belongs to the glycosyl hydrolase 1 family.

The enzyme catalyses Hydrolysis of terminal, non-reducing beta-D-glucosyl residues with release of beta-D-glucose.. This is Beta-glucosidase 13 from Arabidopsis thaliana (Mouse-ear cress).